The sequence spans 296 residues: MEANSGGGGGAEGGRAVTGGGGGGGGSDVELVSKTLQVEHKLFYFDLKENPRGRYLKISEKTSATRSTIIVPSSGISWFLDLFNYYVNSEEHELFSKELQLDSKVFYFDIGENRRGRFLKVSEASVSRNRSTIIVPAGSSPDEGWAAFRNILAEIHEASGLFVMPNQVKPSDGQEHLVDDVGAGFIPGHGSQQPSSSEHNVDRTIDSPGQEETGMTGVSKVIRADQKRFFFDLGNNNRGHFLRISEVAGSDRSSIILPLSGLKQFHEVIGHFVEITKDKIEGMTGANVRTVDPPQR.

The residue at position 1 (Met1) is an N-acetylmethionine. Disordered stretches follow at residues 1-25 (MEAN…GGGG) and 186-214 (IPGH…EETG). Position 207 is a phosphoserine (Ser207).

The protein belongs to the PUR DNA-binding protein family. As to quaternary structure, homodimer. Interacts with TCP20.

It localises to the nucleus. Its function is as follows. Transcription factor that specifically binds the purine-rich double-stranded telomeric repeated sequence 5'-AAACCCTAA-3' found in promoter telo boxes. The polypeptide is Transcription factor Pur-alpha 1 (PURA1) (Arabidopsis thaliana (Mouse-ear cress)).